A 446-amino-acid chain; its full sequence is Exodeoxyribonuclease 7 large subunit (446 aa).

The protein belongs to the XseA family. In terms of assembly, heterooligomer composed of large and small subunits.

The protein resides in the cytoplasm. It catalyses the reaction Exonucleolytic cleavage in either 5'- to 3'- or 3'- to 5'-direction to yield nucleoside 5'-phosphates.. Its function is as follows. Bidirectionally degrades single-stranded DNA into large acid-insoluble oligonucleotides, which are then degraded further into small acid-soluble oligonucleotides. This is Exodeoxyribonuclease 7 large subunit from Streptococcus pneumoniae (strain ATCC 700669 / Spain 23F-1).